The chain runs to 833 residues: Ventricular zone-expressed PH domain-containing protein 1 (833 aa).

Interaction with TGFBR1 stretches follow at residues 201–319 (AELL…LANM) and 663–833 (ESTF…TTYL). In terms of domain architecture, PH spans 716–819 (QPLIEGKLKE…WLQCINVALA (104 aa)).

This sequence belongs to the MELT/VEPH family. Interacts with TGFBR1. In terms of tissue distribution, specifically expressed in kidney and eye. In the eye, expressed in retinal pigmented epithelium but not in the neural retina.

Its subcellular location is the cell membrane. Functionally, interacts with TGF-beta receptor type-1 (TGFBR1) and inhibits dissociation of activated SMAD2 from TGFBR1, impeding its nuclear accumulation and resulting in impaired TGF-beta signaling. May also affect FOXO, Hippo and Wnt signaling. This chain is Ventricular zone-expressed PH domain-containing protein 1 (Veph1), found in Mus musculus (Mouse).